Here is a 228-residue protein sequence, read N- to C-terminus: Orotidine 5'-phosphate decarboxylase (228 aa).

Residues D20, K42, 70 to 79, S127, 180 to 190, G202, and R203 each bind substrate; these read DFKVADIPET and PGVGAQGGDPG. K72 acts as the Proton donor in catalysis.

It belongs to the OMP decarboxylase family. Type 1 subfamily. As to quaternary structure, homodimer.

The catalysed reaction is orotidine 5'-phosphate + H(+) = UMP + CO2. It participates in pyrimidine metabolism; UMP biosynthesis via de novo pathway; UMP from orotate: step 2/2. Its function is as follows. Catalyzes the decarboxylation of orotidine 5'-monophosphate (OMP) to uridine 5'-monophosphate (UMP). This chain is Orotidine 5'-phosphate decarboxylase (pyrF), found in Methanothermobacter thermautotrophicus (strain ATCC 29096 / DSM 1053 / JCM 10044 / NBRC 100330 / Delta H) (Methanobacterium thermoautotrophicum).